The sequence spans 202 residues: Regulator of G-protein signaling 16 (202 aa).

Residues Cys2 and Cys12 are each lipidated (S-palmitoyl cysteine). The RGS domain occupies 65 to 181 (SFDLLLSSKN…LKSPAYRDLA (117 aa)). Tyr168 bears the Phosphotyrosine; by EGFR mark. Position 177 is a phosphotyrosine (Tyr177).

Interacts with GNAI1 and GNAQ. Interacts with GNAI2, GNAI3 and GNAO1. Post-translationally, palmitoylated on Cys-2 and/or Cys-12. Phosphorylated. Phosphorylation at Tyr-168 by EGFR enhances GTPase accelerating (GAP) activity toward GNAI1. Abundantly expressed in retina with lower levels of expression in most other tissues.

It localises to the membrane. Its function is as follows. Regulates G protein-coupled receptor signaling cascades. Inhibits signal transduction by increasing the GTPase activity of G protein alpha subunits, thereby driving them into their inactive GDP-bound form. Plays an important role in the phototransduction cascade by regulating the lifetime and effective concentration of activated transducin alpha. May regulate extra and intracellular mitogenic signals. This chain is Regulator of G-protein signaling 16 (RGS16), found in Homo sapiens (Human).